A 233-amino-acid polypeptide reads, in one-letter code: DNA-directed RNA polymerase V subunit 5C (233 aa).

This sequence belongs to the archaeal Rpo5/eukaryotic RPB5 RNA polymerase subunit family. Component of the RNA polymerase V complex. Expressed in flower buds and siliques.

Its subcellular location is the nucleus. In terms of biological role, DNA-dependent RNA polymerase catalyzes the transcription of DNA into RNA using the four ribonucleoside triphosphates as substrates. Component of RNA polymerase V involved in RNA-directed DNA methylation-dependent (RdDM) silencing of endogenous repeated sequences, including transposable elements. This Arabidopsis thaliana (Mouse-ear cress) protein is DNA-directed RNA polymerase V subunit 5C (NRPE5C).